We begin with the raw amino-acid sequence, 178 residues long: MELEPRTVVLRLGHRRERDKRITTHVCLTARAFGAAGVLISGDHDESVIESVEDVVERWGGPFTVQWVGNWRRVIKDWKRSGGSVVHLTMYGLHIDDVIGELRGENELLVIVGAGKVPAEVFELSDYNVAIGHQPHSEVAALAVFLDRLYEGKELHREFERARLRVVPSEKGKKVERL.

Residue L88 participates in S-adenosyl-L-methionine binding.

Belongs to the aTrm56 family. Homodimer.

It localises to the cytoplasm. The catalysed reaction is cytidine(56) in tRNA + S-adenosyl-L-methionine = 2'-O-methylcytidine(56) in tRNA + S-adenosyl-L-homocysteine + H(+). Functionally, specifically catalyzes the AdoMet-dependent 2'-O-ribose methylation of cytidine at position 56 in tRNAs. The polypeptide is tRNA (cytidine(56)-2'-O)-methyltransferase (Methanopyrus kandleri (strain AV19 / DSM 6324 / JCM 9639 / NBRC 100938)).